A 354-amino-acid chain; its full sequence is Uroporphyrinogen decarboxylase (354 aa).

Substrate-binding positions include 27–31 (RQAGR), aspartate 77, tyrosine 154, threonine 209, and histidine 327.

The protein belongs to the uroporphyrinogen decarboxylase family. Homodimer.

Its subcellular location is the cytoplasm. It catalyses the reaction uroporphyrinogen III + 4 H(+) = coproporphyrinogen III + 4 CO2. The protein operates within porphyrin-containing compound metabolism; protoporphyrin-IX biosynthesis; coproporphyrinogen-III from 5-aminolevulinate: step 4/4. Catalyzes the decarboxylation of four acetate groups of uroporphyrinogen-III to yield coproporphyrinogen-III. The protein is Uroporphyrinogen decarboxylase of Enterobacter sp. (strain 638).